The sequence spans 879 residues: Leucine--tRNA ligase (879 aa).

The 'HIGH' region signature appears at 46-56 (PYPSGALHMGH). Positions 638–642 (KMSKS) match the 'KMSKS' region motif. Lys-641 is a binding site for ATP.

It belongs to the class-I aminoacyl-tRNA synthetase family.

Its subcellular location is the cytoplasm. The catalysed reaction is tRNA(Leu) + L-leucine + ATP = L-leucyl-tRNA(Leu) + AMP + diphosphate. This is Leucine--tRNA ligase from Xanthomonas campestris pv. campestris (strain 8004).